Reading from the N-terminus, the 557-residue chain is Syntaxin-binding protein 4 (557 aa).

Phosphoserine is present on residues S10 and S12. The PDZ domain maps to 19–105 (AFRVITVTKE…RSESPWEIAF (87 aa)). Position 99 is a phosphoserine; by PKB/AKT2 (S99). The segment covering 142–154 (PSETLLPKTSSTP) has biased composition (low complexity). The tract at residues 142 to 214 (PSETLLPKTS…SGPQGKISLN (73 aa)) is disordered. Residues 179-194 (SPITSLDNSPADTSNA) are compositionally biased toward polar residues. S216 carries the post-translational modification Phosphoserine. The stretch at 298-408 (ADEVGKLRQE…NKESVQDLRK (111 aa)) forms a coiled coil. S467 bears the Phosphoserine mark. Residues 500–533 (DCLPYGWEEAYTADGIKYFINHVTQTTSWIHPVM) form the WW domain.

As to quaternary structure, interacts with STX4A. Phosphorylated on Ser-99 by PKB/AKT2 after insulin treatment. Phosphorylation on Ser-99 abolishes the interaction with STX4A. In terms of tissue distribution, detected in skeletal muscle, heart, testis, adipocytes and pancreatic islet cells.

The protein localises to the cytoplasm. Functionally, plays a role in the translocation of transport vesicles from the cytoplasm to the plasma membrane. Inhibits the translocation of SLC2A4 from intracellular vesicles to the plasma membrane by STX4A binding and preventing the interaction between STX4A and VAMP2. Stimulation with insulin disrupts the interaction with STX4A, leading to increased levels of SLC2A4 at the plasma membrane. May also play a role in the regulation of insulin release by pancreatic beta cells after stimulation by glucose. This Mus musculus (Mouse) protein is Syntaxin-binding protein 4 (Stxbp4).